We begin with the raw amino-acid sequence, 306 residues long: Ribosomal RNA small subunit methyltransferase H (306 aa).

Residues 33-35 (GGY), Asp-51, Phe-82, Asp-96, and Gln-103 each bind S-adenosyl-L-methionine.

The protein belongs to the methyltransferase superfamily. RsmH family.

It localises to the cytoplasm. The catalysed reaction is cytidine(1402) in 16S rRNA + S-adenosyl-L-methionine = N(4)-methylcytidine(1402) in 16S rRNA + S-adenosyl-L-homocysteine + H(+). Its function is as follows. Specifically methylates the N4 position of cytidine in position 1402 (C1402) of 16S rRNA. The sequence is that of Ribosomal RNA small subunit methyltransferase H from Rickettsia akari (strain Hartford).